The following is a 430-amino-acid chain: Enolase (430 aa).

Gln-163 is a (2R)-2-phosphoglycerate binding site. The active-site Proton donor is the Glu-205. Mg(2+) is bound by residues Asp-242, Glu-288, and Asp-315. Residues Lys-340, Arg-369, Ser-370, and Lys-391 each contribute to the (2R)-2-phosphoglycerate site. Lys-340 acts as the Proton acceptor in catalysis.

It belongs to the enolase family. Mg(2+) is required as a cofactor.

It localises to the cytoplasm. Its subcellular location is the secreted. The protein resides in the cell surface. It catalyses the reaction (2R)-2-phosphoglycerate = phosphoenolpyruvate + H2O. Its pathway is carbohydrate degradation; glycolysis; pyruvate from D-glyceraldehyde 3-phosphate: step 4/5. Catalyzes the reversible conversion of 2-phosphoglycerate (2-PG) into phosphoenolpyruvate (PEP). It is essential for the degradation of carbohydrates via glycolysis. This is Enolase from Phytoplasma australiense.